Reading from the N-terminus, the 379-residue chain is Queuine tRNA-ribosyltransferase (379 aa).

Asp-94 functions as the Proton acceptor in the catalytic mechanism. Substrate-binding positions include 94-98 (DSGGF), Asp-148, Gln-191, and Gly-218. Positions 249–255 (GVGSPDS) are RNA binding. The active-site Nucleophile is the Asp-268. Positions 273 to 277 (TRIAR) are RNA binding; important for wobble base 34 recognition. Zn(2+)-binding residues include Cys-306, Cys-308, Cys-311, and His-337.

It belongs to the queuine tRNA-ribosyltransferase family. Homodimer. Within each dimer, one monomer is responsible for RNA recognition and catalysis, while the other monomer binds to the replacement base PreQ1. Zn(2+) serves as cofactor.

It carries out the reaction 7-aminomethyl-7-carbaguanine + guanosine(34) in tRNA = 7-aminomethyl-7-carbaguanosine(34) in tRNA + guanine. It functions in the pathway tRNA modification; tRNA-queuosine biosynthesis. In terms of biological role, catalyzes the base-exchange of a guanine (G) residue with the queuine precursor 7-aminomethyl-7-deazaguanine (PreQ1) at position 34 (anticodon wobble position) in tRNAs with GU(N) anticodons (tRNA-Asp, -Asn, -His and -Tyr). Catalysis occurs through a double-displacement mechanism. The nucleophile active site attacks the C1' of nucleotide 34 to detach the guanine base from the RNA, forming a covalent enzyme-RNA intermediate. The proton acceptor active site deprotonates the incoming PreQ1, allowing a nucleophilic attack on the C1' of the ribose to form the product. After dissociation, two additional enzymatic reactions on the tRNA convert PreQ1 to queuine (Q), resulting in the hypermodified nucleoside queuosine (7-(((4,5-cis-dihydroxy-2-cyclopenten-1-yl)amino)methyl)-7-deazaguanosine). This chain is Queuine tRNA-ribosyltransferase, found in Listeria welshimeri serovar 6b (strain ATCC 35897 / DSM 20650 / CCUG 15529 / CIP 8149 / NCTC 11857 / SLCC 5334 / V8).